Here is a 342-residue protein sequence, read N- to C-terminus: Protein-ribulosamine 3-kinase, chloroplastic (342 aa).

The N-terminal 46 residues, 1–46 (MANVALLSAASPSTSSAAPRLRHVARRRPSRRSACPRSAASRLSIM), are a transit peptide targeting the chloroplast. 141–143 (EFI) provides a ligand contact to ATP. The Proton acceptor role is filled by Asp-246.

It belongs to the fructosamine kinase family.

It localises to the plastid. It is found in the chloroplast. The enzyme catalyses N(6)-D-ribulosyl-L-lysyl-[protein] + ATP = N(6)-(3-O-phospho-D-ribulosyl)-L-lysyl-[protein] + ADP + H(+). The catalysed reaction is N(6)-(D-erythrulosyl)-L-lysyl-[protein] + ATP = N(6)-(3-O-phospho-D-erythrulosyl)-L-lysyl-[protein] + ADP + H(+). Functionally, initiates a process leading to the deglycation of proteins. Phosphorylates low-molecular-mass and protein-bound erythrulosamines and ribulosamines, but not fructosamines or psicosamines, on the third carbon of the sugar moiety. Protein-bound erythrulosamine 3-phosphates and ribulosamine 3-phosphates are unstable and decompose under physiological conditions. In Oryza sativa subsp. indica (Rice), this protein is Protein-ribulosamine 3-kinase, chloroplastic.